The sequence spans 425 residues: Glutamate-1-semialdehyde 2,1-aminomutase (425 aa).

K265 is subject to N6-(pyridoxal phosphate)lysine.

The protein belongs to the class-III pyridoxal-phosphate-dependent aminotransferase family. HemL subfamily. Homodimer. It depends on pyridoxal 5'-phosphate as a cofactor.

Its subcellular location is the cytoplasm. It carries out the reaction (S)-4-amino-5-oxopentanoate = 5-aminolevulinate. Its pathway is porphyrin-containing compound metabolism; protoporphyrin-IX biosynthesis; 5-aminolevulinate from L-glutamyl-tRNA(Glu): step 2/2. The chain is Glutamate-1-semialdehyde 2,1-aminomutase from Clostridium perfringens (strain ATCC 13124 / DSM 756 / JCM 1290 / NCIMB 6125 / NCTC 8237 / Type A).